The following is a 474-amino-acid chain: ATP synthase subunit beta 1 (474 aa).

Gly157–Thr164 provides a ligand contact to ATP.

This sequence belongs to the ATPase alpha/beta chains family. F-type ATPases have 2 components, CF(1) - the catalytic core - and CF(0) - the membrane proton channel. CF(1) has five subunits: alpha(3), beta(3), gamma(1), delta(1), epsilon(1). CF(0) has three main subunits: a(1), b(2) and c(9-12). The alpha and beta chains form an alternating ring which encloses part of the gamma chain. CF(1) is attached to CF(0) by a central stalk formed by the gamma and epsilon chains, while a peripheral stalk is formed by the delta and b chains.

It localises to the cell inner membrane. It catalyses the reaction ATP + H2O + 4 H(+)(in) = ADP + phosphate + 5 H(+)(out). Its function is as follows. Produces ATP from ADP in the presence of a proton gradient across the membrane. The catalytic sites are hosted primarily by the beta subunits. The sequence is that of ATP synthase subunit beta 1 from Albidiferax ferrireducens (strain ATCC BAA-621 / DSM 15236 / T118) (Rhodoferax ferrireducens).